Here is a 422-residue protein sequence, read N- to C-terminus: GTPase Obg (422 aa).

One can recognise an Obg domain in the interval 1 to 158 (MFYDRAKIYV…LWLELELKVI (158 aa)). The OBG-type G domain occupies 159–330 (ADVGLIGFPN…VIHRVAELLA (172 aa)). GTP is bound by residues 165 to 172 (GFPNAGKS), 190 to 194 (FTTLV), 212 to 215 (DIPG), 282 to 285 (NKMD), and 311 to 313 (SAA). Residues S172 and T192 each contribute to the Mg(2+) site. The OCT domain maps to 344-422 (VMFEPEERFN…IGDWEFEWSE (79 aa)).

The protein belongs to the TRAFAC class OBG-HflX-like GTPase superfamily. OBG GTPase family. Monomer. The cofactor is Mg(2+).

The protein resides in the cytoplasm. Functionally, an essential GTPase which binds GTP, GDP and possibly (p)ppGpp with moderate affinity, with high nucleotide exchange rates and a fairly low GTP hydrolysis rate. Plays a role in control of the cell cycle, stress response, ribosome biogenesis and in those bacteria that undergo differentiation, in morphogenesis control. This Desulforamulus reducens (strain ATCC BAA-1160 / DSM 100696 / MI-1) (Desulfotomaculum reducens) protein is GTPase Obg.